The following is an 89-amino-acid chain: Huwentoxin-IV (89 aa).

A signal peptide spans 1-24; sequence MVNMKASMFLALAGLVLLFVVCYA. The propeptide occupies 25–52; it reads SESEEKEFSNELLSSVLAVDDNSKGEER. Residue E53 is modified to Pyrrolidone carboxylic acid (Glu); partial. Intrachain disulfides connect C54–C69, C61–C76, and C68–C83. I87 carries the post-translational modification Isoleucine amide.

Belongs to the neurotoxin 10 (Hwtx-1) family. 22 (Htx-4) subfamily. In terms of processing, two forms of huwentoxin-IV exist in the venom of H.schmidti, a non-N-terminally modified (HwTx-IV) and a naturally modified peptide with pyroglutamic acid residue at position 53 (mHwTx-IV). mHwTx-IV shows no observable difference with the unmodified toxin when applied to the TTX-S sodium channel of DRG neuron (IC(50)~50 nM) or when tested on hNav1.7/SCN9A (IC(50)=30.8 nM). In addition, similarly to the unmodified toxin, mHwTx-IV has only a weak affinity for lipid membranes. However, in contrast with HwTx-IV, which dissociates at moderate and high depolarization voltages (50-200 mV), mHwTx-IV inhibition of TTX-sensitive sodium channels is not reversed by strong depolarization voltages. Expressed by the venom gland.

Its subcellular location is the secreted. In terms of biological role, this lethal neurotoxin (without cyclization at position 53) inhibits neuronal voltage-gated sodium channel Nav1.2/SCN2A (IC(50)=10-150 nM), rNav1.3/SCN3A (IC(50)=338 nM), Nav1.6/SCN8A (IC(50)=117 nM), and hNav1.7/SCN9A (IC(50)=9.6-33 nM). It inhibits activation of sodium channel by trapping the voltage sensor of domain II (DIIS4) in the closed configuration. The toxin neither shifts the Nav1.7/SCN9A activation curve nor modifies the slope factor. It does not slow fast-inactivation of hNav1.7/SCN9A channels. In addition, it has only a weak affinity for lipid membranes. This toxin also exists with a pyroglutamate at position 53. The sole difference observed between modified (mHwTx-IV) and unmodified toxins is that moderate or high depolarization voltages (200 mV) permit the unmodified toxin to dissociate, whereas mHwTx-IV toxin does not dissociate, even at high depolarization voltages. These data indicate that mHwTx-IV strongly binds to voltage sensor of sodium channel even at extreme depolarization voltages. The polypeptide is Huwentoxin-IV (Cyriopagopus schmidti (Chinese bird spider)).